We begin with the raw amino-acid sequence, 67 residues long: Arasin 2 (67 aa).

An N-terminal signal peptide occupies residues 1–25 (MERRTLLVVLLVCSCVVAAAAEASP). A disordered region spans residues 22-44 (EASPSRWPSPGRPRPFPGRPNPI). The span at 31 to 44 (PGRPRPFPGRPNPI) shows a compositional bias: pro residues. 2 disulfides stabilise this stretch: cysteine 50–cysteine 59 and cysteine 52–cysteine 57.

As to quaternary structure, interacts with chitin through the N-terminal region (26-48). This interaction may be important, since chitin is a component of the fungal cell wall, as well as of the crab exoskeleton (permitting a possible action of arasin in wound healing in case of lesions). In terms of processing, disulfide bonds are important for activity especially against Gram-negative bacteria, since the linearization of the peptide causes a strong decrease of activity on these bacteria. Mainly expressed in hemocytes. No or very low expression in heart, gills, inestines, and epidermis.

In terms of biological role, antimicrobial peptide that has a large activity spectrum with activity against Gram-positive, Gram-negative bacteria, as well as against fungi. Shows activity at micromolar concentrations. Displays minimal inhibitory concentration (MIC) values lower than minimal bactericidal concentrations (MBC). May have a dual mode of action depending on the peptide concentrations. At MIC concentrations, the peptide penetrates into the cytoplasm of target cells (tested on the Gram-negative E.coli). The two inner membrane proteins YgdD and SbmA may be required for this uptake. At concentrations higher than MIC, arasin may act by disrupting membranes. Does not show hemolytic activity. The chain is Arasin 2 from Hyas araneus (Atlantic lyre crab).